A 340-amino-acid chain; its full sequence is uncharacterized protein (340 aa).

Positions 58–307 (AALPFRYTVN…PSYREMLRER (250 aa)) constitute a Radical SAM core domain. Positions 72, 76, and 79 each coordinate [4Fe-4S] cluster. The next 2 membrane-spanning stretches (helical) occupy residues 140 to 160 (YALMPGIIGALAASGTPLSIL) and 243 to 263 (QLLGQIAAAGATGVTVFGLHL).

It depends on [4Fe-4S] cluster as a cofactor.

The protein localises to the cell membrane. This is an uncharacterized protein from Mycobacterium tuberculosis (strain CDC 1551 / Oshkosh).